The sequence spans 344 residues: MMVIRPVERSDVSALMQLASKTGGGLTSLPANEATLSVRIERAIKTWQGELPKSEQGYVFVLEDSETGTVAGICAIEVAVGLNDPWYNYRVGTLVHASKELNVYNALPTLFLSNDHTGSSELCTLFLDPEWRKEGNGYLLSKSRFMFMAAFRDKFNDKVVAEMRGVIDEHGYSPFWQSLGKRFFSMDFSRADFLCGTGQKAFIAELMPKHPIYTHFLSQEAQDVIGQVHPQTAPARAVLEKEGFRYRNYIDIFDGGPTLECDIDRVRAIRKSRLVEVAEGQPAQGDFPACLVANENYHHFRVVLVRTDPATERLILTAAQLDALKCHAGDRVRLVRLCAEEKTA.

Leu125 contributes to the succinyl-CoA binding site. His229 functions as the Proton donor in the catalytic mechanism.

The protein belongs to the arginine N-succinyltransferase family.

It carries out the reaction succinyl-CoA + L-arginine = N(2)-succinyl-L-arginine + CoA + H(+). The protein operates within amino-acid degradation; L-arginine degradation via AST pathway; L-glutamate and succinate from L-arginine: step 1/5. Its function is as follows. Catalyzes the transfer of succinyl-CoA to arginine to produce N(2)-succinylarginine. This chain is Arginine N-succinyltransferase, found in Escherichia coli O127:H6 (strain E2348/69 / EPEC).